The following is a 360-amino-acid chain: DNA replication and repair protein RecF (360 aa).

Residue 33–40 (GENGSGKT) coordinates ATP.

The protein belongs to the RecF family.

The protein localises to the cytoplasm. In terms of biological role, the RecF protein is involved in DNA metabolism; it is required for DNA replication and normal SOS inducibility. RecF binds preferentially to single-stranded, linear DNA. It also seems to bind ATP. The sequence is that of DNA replication and repair protein RecF from Rickettsia massiliae (strain Mtu5).